A 236-amino-acid chain; its full sequence is MKKKLYEGSSKTLYSSEEEFLLVMAFSDKATLENGEIIDVSGKGVLNNNISSFVMNKLEMIGIENHFIEKLNMREQLIQYVEMFPLQVVVSSVACGRFVKEFGMDEGFVFDKPIIDFKVKSREFKYPIVNEHQILNFGWLTKDEINTVKKQALRIYDFLSGLFIGIGIRLVECNLEFGRVFTGEESLVMLTDEISPDTCKLWHINSNERLGFELLEKDPAKAYESYKLIADRLKEK.

It belongs to the SAICAR synthetase family.

It carries out the reaction 5-amino-1-(5-phospho-D-ribosyl)imidazole-4-carboxylate + L-aspartate + ATP = (2S)-2-[5-amino-1-(5-phospho-beta-D-ribosyl)imidazole-4-carboxamido]succinate + ADP + phosphate + 2 H(+). It participates in purine metabolism; IMP biosynthesis via de novo pathway; 5-amino-1-(5-phospho-D-ribosyl)imidazole-4-carboxamide from 5-amino-1-(5-phospho-D-ribosyl)imidazole-4-carboxylate: step 1/2. This is Phosphoribosylaminoimidazole-succinocarboxamide synthase from Rickettsia bellii (strain OSU 85-389).